The chain runs to 133 residues: Protein msa (133 aa).

The next 4 helical transmembrane spans lie at 3 to 23, 27 to 47, 55 to 75, and 103 to 123; these read YLILSLVANLLVFGVLSAIGL, ILAAMMMILVIPITISGILFF, YIFFNILFIDFYYYIYNVHLM, and FGFDEILFFTLYLLLILIILY.

The protein localises to the cell membrane. Accessory element involved in the expression of sarA and several virulence factors. Modulates SarA production and/or function in a strain-dependent manner. Affects the transcription of the accessory gene regulator (agr) and genes encoding virulence factors including alpha toxin (hla) and protein A (spa). In Staphylococcus aureus (strain bovine RF122 / ET3-1), this protein is Protein msa (msa).